Here is a 217-residue protein sequence, read N- to C-terminus: Adenylate kinase (217 aa).

10–15 (GAGKGT) provides a ligand contact to ATP. The NMP stretch occupies residues 30–59 (STGDMLRAQIKAGTELGMKAKAIMDAGGLV). AMP-binding positions include threonine 31, arginine 36, 57-59 (GLV), 85-88 (GFPR), and glutamine 92. An LID region spans residues 122–159 (GRRVHVASGRTYHVVFNPPKVAGKDDVTGEDLIQRDDD). Residues arginine 123 and 132-133 (TY) each bind ATP. Residues arginine 156 and arginine 167 each coordinate AMP. Glycine 203 is an ATP binding site.

This sequence belongs to the adenylate kinase family. In terms of assembly, monomer.

It is found in the cytoplasm. The enzyme catalyses AMP + ATP = 2 ADP. The protein operates within purine metabolism; AMP biosynthesis via salvage pathway; AMP from ADP: step 1/1. Catalyzes the reversible transfer of the terminal phosphate group between ATP and AMP. Plays an important role in cellular energy homeostasis and in adenine nucleotide metabolism. The chain is Adenylate kinase from Thiobacillus denitrificans (strain ATCC 25259 / T1).